Here is a 414-residue protein sequence, read N- to C-terminus: Putative F-box/kelch-repeat protein At1g20940 (414 aa).

Positions 13-65 constitute an F-box domain; the sequence is SSIINDLPLDLLDEILFRLEPKSMAMMRCTNNSIKSYLSDPRFGPEYPSWVRP. Kelch repeat units lie at residues 281 to 328 and 331 to 378; these read LTLI…MYDG and LVVR…KLTP.

As to quaternary structure, interacts with DEK3.

The protein operates within protein modification; protein ubiquitination. Its function is as follows. Probable component of an E3 ubiquitin ligase complex. This chain is Putative F-box/kelch-repeat protein At1g20940, found in Arabidopsis thaliana (Mouse-ear cress).